Consider the following 525-residue polypeptide: Peptide chain release factor 3 (525 aa).

A tr-type G domain is found at 9 to 276 (AKRRTFAIIS…GFTRYAPAPQ (268 aa)). GTP is bound by residues 18–25 (SHPDAGKT), 86–90 (DTPGH), and 140–143 (NKFD).

Belongs to the TRAFAC class translation factor GTPase superfamily. Classic translation factor GTPase family. PrfC subfamily.

Its subcellular location is the cytoplasm. Increases the formation of ribosomal termination complexes and stimulates activities of RF-1 and RF-2. It binds guanine nucleotides and has strong preference for UGA stop codons. It may interact directly with the ribosome. The stimulation of RF-1 and RF-2 is significantly reduced by GTP and GDP, but not by GMP. This is Peptide chain release factor 3 from Francisella tularensis subsp. novicida (strain U112).